A 397-amino-acid chain; its full sequence is 3-hydroxybenzoate 6-hydroxylase (397 aa).

It belongs to the 3-hydroxybenzoate 6-hydroxylase family. In terms of assembly, monomer. It depends on FAD as a cofactor.

It catalyses the reaction 3-hydroxybenzoate + NADH + O2 + H(+) = 2,5-dihydroxybenzoate + NAD(+) + H2O. Its activity is regulated as follows. Inhibited by copper, mercury and iron ions. Catalyzes the NAD- or NADP-dependent conversion of 3-hydroxybenzoate to gentisate. NAD and NADP function equally well. This Klebsiella oxytoca protein is 3-hydroxybenzoate 6-hydroxylase (mhbM).